Reading from the N-terminus, the 200-residue chain is Small ribosomal subunit protein uS4 (200 aa).

Positions 1–13 (MARYRGPKQKIAR) are enriched in basic residues. Positions 1-44 (MARYRGPKQKIARRFKEPIFGPSKALERKPYPPGQHGQSRRRRE) are disordered. In terms of domain architecture, S4 RNA-binding spans 92-154 (ARLDNTVFRM…SQDLEVIQTN (63 aa)).

Belongs to the universal ribosomal protein uS4 family. As to quaternary structure, part of the 30S ribosomal subunit. Contacts protein S5. The interaction surface between S4 and S5 is involved in control of translational fidelity.

Its function is as follows. One of the primary rRNA binding proteins, it binds directly to 16S rRNA where it nucleates assembly of the body of the 30S subunit. With S5 and S12 plays an important role in translational accuracy. The polypeptide is Small ribosomal subunit protein uS4 (Salinibacter ruber (strain DSM 13855 / M31)).